We begin with the raw amino-acid sequence, 89 residues long: Small ribosomal subunit protein bS20 (89 aa).

It belongs to the bacterial ribosomal protein bS20 family.

Functionally, binds directly to 16S ribosomal RNA. This is Small ribosomal subunit protein bS20 from Syntrophus aciditrophicus (strain SB).